A 169-amino-acid chain; its full sequence is Diuretic hormone 44 (169 aa).

Residues M1–S18 form the signal peptide. A propeptide spanning residues A19–R96 is cleaved from the precursor. The stretch at M83–I108 forms a coiled coil. Q97 is subject to Pyrrolidone carboxylic acid. At I108 the chain carries Isoleucine amide. Residues G109–L169 constitute a propeptide that is removed on maturation.

Post-translationally, residues Ile-66 to Gly-109 may constitute another form of the DH44 peptide, which has not been detected yet. As to expression, expressed in brain, ventral ganglia and the retrocerebral complex (at protein level).

It localises to the secreted. Regulation of fluid secretion. In Camponotus floridanus (Florida carpenter ant), this protein is Diuretic hormone 44.